We begin with the raw amino-acid sequence, 131 residues long: Steroid Delta-isomerase (131 aa).

The active-site Proton donor is the Tyr16. Asp40 acts as the Proton acceptor in catalysis. Asp103 contacts substrate.

As to quaternary structure, homodimer.

The catalysed reaction is a 3-oxo-Delta(5)-steroid = a 3-oxo-Delta(4)-steroid. The sequence is that of Steroid Delta-isomerase (ksi) from Pseudomonas putida (Arthrobacter siderocapsulatus).